The chain runs to 244 residues: Osmotin-like protein OSM34 (244 aa).

Residues 1–22 form the signal peptide; it reads MANLLVSTFIFSALLLISTATA. Intrachain disulfides connect Cys-31-Cys-222, Cys-72-Cys-82, Cys-87-Cys-93, Cys-138-Cys-212, Cys-143-Cys-195, Cys-151-Cys-161, Cys-165-Cys-174, and Cys-175-Cys-182.

The protein belongs to the thaumatin family.

The protein is Osmotin-like protein OSM34 (OSM34) of Arabidopsis thaliana (Mouse-ear cress).